The chain runs to 223 residues: MEDVKLEFPSLPQCKEDAEEWTYPMRREMQEILPGLFLGPYSSAMKSKLPVLQKHGITHIICIRQNIEANFIKPNFQQLFRYLVLDIADNPVENIIRFFPMTKEFIDGSLQMGGKVLVHGNAGISRSAAFVIAYIMETFGMKYRDAFAYVQERRFCINPNAGFVHQLQEYEAIYLAKLTIQMMSPLQIERSLSVHSGTTGSLKRTHEEEDDFGTMQVATAQNG.

The region spanning 28-176 (EMQEILPGLF…LQEYEAIYLA (149 aa)) is the Tyrosine-protein phosphatase domain. Residues 76–78 (FQQ) carry the Interaction with FBXW7 motif. A phosphoserine mark is found at S184, S193, and S201. Positions 197–223 (GTTGSLKRTHEEEDDFGTMQVATAQNG) are disordered.

The protein belongs to the protein-tyrosine phosphatase family. Non-receptor class subfamily. Interacts with MAPK1; independently of MAPK1 phosphorylation status. Interacts with CARHSP1/Crhsp-24. Interacts (via FQQ motif) with FBXW7 isoforms 1 (via F-box domain) and 3 (via F-box domain); the interaction is direct and prevents FBXW7 interaction with SKP1, a component of the SCF(FBXW7) complex. Does not interact with FBXW7 isoform 2.

It is found in the nucleus. The protein localises to the cytoplasm. It localises to the cytosol. Catalytically inactive phosphatase. Acts as a nuclear anchor for MAPK1/MAPK3 (ERK1/ERK2). Modulates cell-fate decisions and cell migration by spatiotemporal regulation of MAPK1/MAPK3 (ERK1/ERK2). By binding to the F-box of FBXW7, prevents the assembly of FBXW7 into the SCF E3 ubiquitin-protein ligase complex, and thereby inhibits degradation of its substrates. Plays a role in spermatogenesis. The protein is Serine/threonine/tyrosine-interacting protein of Homo sapiens (Human).